The sequence spans 172 residues: MALRIEDKKAIVAEVAEQVSSALSAAVADYRGLTVNEMTSLRKQARESGVYLRVVRNNLARLAIKGTDFECLGDALKGPLVLALSKDEPGAAAKLFKSFQKDHNAFEVKNLAMSGELFGPEKLDDFAKLPTREEALATLLNVMQAPVTKFVRTLNEIPSQAVRVFAAVGDSK.

Belongs to the universal ribosomal protein uL10 family. As to quaternary structure, part of the ribosomal stalk of the 50S ribosomal subunit. The N-terminus interacts with L11 and the large rRNA to form the base of the stalk. The C-terminus forms an elongated spine to which L12 dimers bind in a sequential fashion forming a multimeric L10(L12)X complex.

In terms of biological role, forms part of the ribosomal stalk, playing a central role in the interaction of the ribosome with GTP-bound translation factors. The chain is Large ribosomal subunit protein uL10 from Francisella philomiragia subsp. philomiragia (strain ATCC 25017 / CCUG 19701 / FSC 153 / O#319-036).